Reading from the N-terminus, the 787-residue chain is Patatin-like phospholipase domain-containing protein OOU_Y34scaffold00095g16.3 (787 aa).

Disordered stretches follow at residues 47–69 (APDT…ARSF) and 137–164 (KVVG…PGRR). The span at 59–69 (ASPRSPSARSF) shows a compositional bias: low complexity. The segment covering 144 to 157 (HRQKKSSRRRKRSK) has biased composition (basic residues). The chain crosses the membrane as a helical span at residues 180-200 (WPFLLIVGAWIVGLAVTYLFT). Positions 375–566 (LCLSGGASFA…RTDIPIRALN (192 aa)) constitute a PNPLA domain. The GXSXG motif lies at 406–410 (GTSGG). Catalysis depends on Ser-408, which acts as the Nucleophile. Asp-553 functions as the Proton acceptor in the catalytic mechanism. The interval 745–787 (GTDEEITTNDEMEFASDEKAVLTEDEGQFDGVTDNTEGSPLLK) is disordered. A compositionally biased stretch (acidic residues) spans 746–759 (TDEEITTNDEMEFA). Residues 777 to 787 (TDNTEGSPLLK) are compositionally biased toward polar residues.

This sequence belongs to the PLPL family.

The protein resides in the membrane. In terms of biological role, probable lipid hydrolase. The polypeptide is Patatin-like phospholipase domain-containing protein OOU_Y34scaffold00095g16.3 (Pyricularia oryzae (strain Y34) (Rice blast fungus)).